The following is a 673-amino-acid chain: NACHT, LRR and PYD domains-containing protein 10 (673 aa).

The Pyrin domain occupies 1 to 92 (MALARANSPQ…VDYLNQVCLN (92 aa)). The 307-residue stretch at 163-469 (PIVVMQGSAG…AMSFLVKEDQ (307 aa)) folds into the NACHT domain. An ATP-binding site is contributed by 169–176 (GSAGTGKT). The interval 578–673 (SDKKKSVSVT…DGEMIDKMNG (96 aa)) is disordered. Over residues 584–597 (VSVTSSFSSGKVQS) the composition is skewed to low complexity. Over residues 633 to 648 (ASREKGHMEMNDKEDG) the composition is skewed to basic and acidic residues. The span at 649–658 (GVEEQEDEEG) shows a compositional bias: acidic residues. Basic and acidic residues predominate over residues 659 to 673 (QTLKKDGEMIDKMNG).

Belongs to the NLRP family. As to quaternary structure, oligomerizes. Interacts with PYCARD. Also interacts with CASP1 and IL1B. Interacts with NOD1 and components of the NOD1 signaling pathway including RIPK2, NR2C2/TAK1 and IKBKG/NEMO. As to expression, expressed in skin, tongue, heart, colon and several cell lines of hematopoietic and myocytic origin but not in kidney, skeletal muscle, spleen, liver, lung, thymus, brain or small intestine (at protein level).

The protein localises to the cytoplasm. Its subcellular location is the cell membrane. Its function is as follows. Inhibits autoprocessing of CASP1, CASP1-dependent IL1B secretion, PYCARD aggregation and PYCARD-mediated apoptosis but not apoptosis induced by FAS or BID. Displays anti-inflammatory activity. Required for immunity against C.albicans infection. Involved in the innate immune response by contributing to pro-inflammatory cytokine release in response to invasive bacterial infection. Contributes to T-cell-mediated inflammatory responses in the skin. Plays a role in protection against periodontitis through its involvement in induction of IL1A via ERK activation in oral epithelial cells infected with periodontal pathogens. Exhibits both ATPase and GTPase activities. The protein is NACHT, LRR and PYD domains-containing protein 10 (Nlrp10) of Mus musculus (Mouse).